A 91-amino-acid polypeptide reads, in one-letter code: Succinate dehydrogenase assembly factor 1A, mitochondrial (91 aa).

This sequence belongs to the complex I LYR family. SDHAF1 subfamily. In terms of assembly, interacts with the iron-sulfur protein subunit within the SDH catalytic dimer.

Its subcellular location is the mitochondrion matrix. In terms of biological role, plays an essential role in the assembly of succinate dehydrogenase (SDH), an enzyme complex (also referred to as respiratory complex II) that is a component of both the tricarboxylic acid (TCA) cycle and the mitochondrial electron transport chain, and which couples the oxidation of succinate to fumarate with the reduction of ubiquinone (coenzyme Q) to ubiquinol. Promotes maturation of the iron-sulfur protein subunit of the SDH catalytic dimer, protecting it from the deleterious effects of oxidants. May act together with SDHAF3. This is Succinate dehydrogenase assembly factor 1A, mitochondrial from Dictyostelium discoideum (Social amoeba).